A 184-amino-acid chain; its full sequence is ATP synthase subunit delta (184 aa).

The protein belongs to the ATPase delta chain family. F-type ATPases have 2 components, F(1) - the catalytic core - and F(0) - the membrane proton channel. F(1) has five subunits: alpha(3), beta(3), gamma(1), delta(1), epsilon(1). F(0) has three main subunits: a(1), b(2) and c(10-14). The alpha and beta chains form an alternating ring which encloses part of the gamma chain. F(1) is attached to F(0) by a central stalk formed by the gamma and epsilon chains, while a peripheral stalk is formed by the delta and b chains.

The protein resides in the cell membrane. Functionally, f(1)F(0) ATP synthase produces ATP from ADP in the presence of a proton or sodium gradient. F-type ATPases consist of two structural domains, F(1) containing the extramembraneous catalytic core and F(0) containing the membrane proton channel, linked together by a central stalk and a peripheral stalk. During catalysis, ATP synthesis in the catalytic domain of F(1) is coupled via a rotary mechanism of the central stalk subunits to proton translocation. Its function is as follows. This protein is part of the stalk that links CF(0) to CF(1). It either transmits conformational changes from CF(0) to CF(1) or is implicated in proton conduction. This is ATP synthase subunit delta from Wolbachia pipientis subsp. Culex pipiens (strain wPip).